A 377-amino-acid polypeptide reads, in one-letter code: MSDSYVFSSPIIIHPGSDTLQAGLADEEHPGSIFPNIVGRHKLAGLMEWVDQRVLCVGQEAIDQSATVLLRHPVWSGIVGDWEAFAAVLRHTFYRALWVAPEEHPIVVTESPHVYRSFQLRREQLTRLLFETFHAPQVAVCSEAAMSLYACGLDTGLVVSLGDFVSYVAPVHRGAIVDAGLTFLEPDGRSITEYLSRLLLERGHVFTSPEALRLVRDIKETLCYVADDVAKEAARNADSVEATYLLPNGETLVLGNERFRCPEVLFHPDLLGWESPGLTDAVCNAIMKCDPSLQAELFGNIVVTGGGSLFPGLSERLQRELEQRAPAEAPVHLLTRDDRRHLPWKGAARFARDAQFAGFALTRQAYERHGAELIYQM.

It belongs to the actin family.

Its function is as follows. May be a dominant-negative inhibitor of eukaryotic actin polymerization. The polypeptide is Bacterial actin-related protein (barP) (Haliangium ochraceum (strain DSM 14365 / JCM 11303 / SMP-2)).